The chain runs to 108 residues: UPF0060 membrane protein SAR2425 (108 aa).

4 consecutive transmembrane segments (helical) span residues 5–25, 31–51, 60–80, and 86–106; these read IFIF…IWLW, SSLV…IATF, VYAA…MVVD, and KYDV…LLPS.

The protein belongs to the UPF0060 family.

It is found in the cell membrane. The protein is UPF0060 membrane protein SAR2425 of Staphylococcus aureus (strain MRSA252).